We begin with the raw amino-acid sequence, 1071 residues long: Carbamoyl phosphate synthase large chain (1071 aa).

Residues 1-403 are carboxyphosphate synthetic domain; sequence MPKRTDLKSI…SFQKALRGLE (403 aa). 12 residues coordinate ATP: Arg-129, Arg-169, Gly-175, Gly-176, Gln-208, Val-210, Glu-215, Gly-241, Val-242, His-243, Gln-285, and Glu-299. The 196-residue stretch at 133 to 328 folds into the ATP-grasp 1 domain; sequence KEAMEKIGLS…IAKVAAKLAV (196 aa). Gln-285, Glu-299, and Asn-301 together coordinate Mg(2+). Gln-285, Glu-299, and Asn-301 together coordinate Mn(2+). The interval 404–548 is oligomerization domain; that stretch reads TGLCGFNPRS…YSTYEEECEA (145 aa). A carbamoyl phosphate synthetic domain region spans residues 549–930; it reads RPSDRKKVMI…AYYKAQLGAG (382 aa). Positions 673 to 864 constitute an ATP-grasp 2 domain; sequence QKVLNDLGLR…LAKVGARCMA (192 aa). ATP is bound by residues Arg-709, Phe-748, Leu-750, Glu-755, Gly-780, Ile-781, His-782, Ser-783, Gln-823, and Glu-835. Mg(2+)-binding residues include Gln-823, Glu-835, and Asn-837. Positions 823, 835, and 837 each coordinate Mn(2+). In terms of domain architecture, MGS-like spans 931–1071; that stretch reads ERLNPTGKIF…ELHGRLKNRS (141 aa). The segment at 931-1071 is allosteric domain; sequence ERLNPTGKIF…ELHGRLKNRS (141 aa).

Belongs to the CarB family. As to quaternary structure, composed of two chains; the small (or glutamine) chain promotes the hydrolysis of glutamine to ammonia, which is used by the large (or ammonia) chain to synthesize carbamoyl phosphate. Tetramer of heterodimers (alpha,beta)4. The cofactor is Mg(2+). Mn(2+) serves as cofactor.

The catalysed reaction is hydrogencarbonate + L-glutamine + 2 ATP + H2O = carbamoyl phosphate + L-glutamate + 2 ADP + phosphate + 2 H(+). It carries out the reaction hydrogencarbonate + NH4(+) + 2 ATP = carbamoyl phosphate + 2 ADP + phosphate + 2 H(+). The protein operates within amino-acid biosynthesis; L-arginine biosynthesis; carbamoyl phosphate from bicarbonate: step 1/1. Its pathway is pyrimidine metabolism; UMP biosynthesis via de novo pathway; (S)-dihydroorotate from bicarbonate: step 1/3. Its function is as follows. Large subunit of the glutamine-dependent carbamoyl phosphate synthetase (CPSase). CPSase catalyzes the formation of carbamoyl phosphate from the ammonia moiety of glutamine, carbonate, and phosphate donated by ATP, constituting the first step of 2 biosynthetic pathways, one leading to arginine and/or urea and the other to pyrimidine nucleotides. The large subunit (synthetase) binds the substrates ammonia (free or transferred from glutamine from the small subunit), hydrogencarbonate and ATP and carries out an ATP-coupled ligase reaction, activating hydrogencarbonate by forming carboxy phosphate which reacts with ammonia to form carbamoyl phosphate. The chain is Carbamoyl phosphate synthase large chain from Neisseria meningitidis serogroup A / serotype 4A (strain DSM 15465 / Z2491).